We begin with the raw amino-acid sequence, 364 residues long: Transcription factor SPEECHLESS (364 aa).

Residues 35-109 (GEISPTAAST…QKMSHVTVER (75 aa)) form a disordered region. A Phosphoserine; by ASK7 modification is found at Ser38. A Phosphothreonine; by ASK7 modification is found at Thr40. A compositionally biased stretch (polar residues) spans 40–53 (TAASTPKDGTTSSK). Ser43 is modified (phosphoserine; by ASK7). Thr44 bears the Phosphothreonine; by ASK7 mark. Position 65 is a phosphoserine; by ASK7 (Ser65). A compositionally biased stretch (acidic residues) spans 79–92 (EDEEEEDGDGEAEE). The interval 99 to 112 (QQKMSHVTVERNRR) is basic motif. In terms of domain architecture, bHLH spans 99–150 (QQKMSHVTVERNRRKQMNEHLTVLRSLMPCFYVKRGDQASIIGGVVEYISEL). The tract at residues 113 to 150 (KQMNEHLTVLRSLMPCFYVKRGDQASIIGGVVEYISEL) is helix-loop-helix motif. Residue Ser171 is modified to Phosphoserine; by ASK7. The disordered stretch occupies residues 171–227 (SPRVVPSPRPSPPVLSPRKPPLSPRINHHQIHHHLLLPPISPRTPQPTSPYRAIPPQ). The span at 175–193 (VPSPRPSPPVLSPRKPPLS) shows a compositional bias: pro residues. Ser177 carries the post-translational modification Phosphoserine; by ASK7, MPK3 and MPK6. Residue Ser181 is modified to Phosphoserine; by ASK7. At Ser186 the chain carries Phosphoserine; by CDKA-1, ASK7, MPK3 and MPK6. A Phosphoserine; by MPK3 and MPK6 modification is found at Ser193. Positions 196-205 (INHHQIHHHL) are enriched in basic residues. Residues 209-218 (PISPRTPQPT) are compositionally biased toward pro residues. Ser211 is modified (phosphoserine; by MPK3 and MPK6). Position 214 is a phosphothreonine; by ASK7, MPK3 and MPK6 (Thr214). A Phosphoserine; by ASK7, MPK3 and MPK6 modification is found at Ser219.

As to quaternary structure, homodimer. Forms dimers with SCRM and SCRM2. May interact with CDKA-1. Post-translationally, phosphorylated by ASK7/BIN2 and ASK3/SK12; this post-translational modification inhibits activity and limit epidermal cell proliferation. Phosphorylation by MPK3 and MPK6 leads to the inhibition of stomatal fate and to degradation. Stabilized by CDKA-1-mediated phosphorylation at Ser-186 which promotes stomatal development. Expressed in developing leaf epidermis. Reduced accumulation in the stomatal lineage ground cells (SLGCs) where BASL is polarized in the cell cortex. Observed in small cells of non-protruding hypocotyl cell files and of developing cotyledon epidermis. Restricted to meristemoids (stomatal precursor cell) in leaves epidermis, mostly in dividing cells of non-protruding cell files.

The protein localises to the nucleus. Its activity is regulated as follows. Negatively regulated through phosphorylation by the MAPK module. Activity is constrained by polarized BASL in stomatal lineage ground cells (SLGCs) undergoing ACD. Functionally, transcription factor acting as an integration node for stomata and brassinosteroid (BR) signaling pathways to control stomatal initiation and development. Activates transcription when in the presence of SCRM/ICE1. Functions as a dimer with SCRM or SCRM2 during stomatal initiation. Required for the initiation, the spacing and the formation of stomata, by promoting the first asymmetric cell divisions. Together with FMA and MUTE, modulates the stomata formation. Involved in the regulation of growth reduction under osmotic stress (e.g. mannitol), associated with a quick decrease of meristemoid mother cells (MMCs) number lower stomatal index and density. This is Transcription factor SPEECHLESS from Arabidopsis thaliana (Mouse-ear cress).